Reading from the N-terminus, the 361-residue chain is UDP-N-acetylglucosamine--N-acetylmuramyl-(pentapeptide) pyrophosphoryl-undecaprenol N-acetylglucosamine transferase (361 aa).

UDP-N-acetyl-alpha-D-glucosamine is bound by residues 21–23 (TGG), N131, R172, S195, I250, and Q295.

Belongs to the glycosyltransferase 28 family. MurG subfamily.

Its subcellular location is the cell inner membrane. The enzyme catalyses di-trans,octa-cis-undecaprenyl diphospho-N-acetyl-alpha-D-muramoyl-L-alanyl-D-glutamyl-meso-2,6-diaminopimeloyl-D-alanyl-D-alanine + UDP-N-acetyl-alpha-D-glucosamine = di-trans,octa-cis-undecaprenyl diphospho-[N-acetyl-alpha-D-glucosaminyl-(1-&gt;4)]-N-acetyl-alpha-D-muramoyl-L-alanyl-D-glutamyl-meso-2,6-diaminopimeloyl-D-alanyl-D-alanine + UDP + H(+). Its pathway is cell wall biogenesis; peptidoglycan biosynthesis. In terms of biological role, cell wall formation. Catalyzes the transfer of a GlcNAc subunit on undecaprenyl-pyrophosphoryl-MurNAc-pentapeptide (lipid intermediate I) to form undecaprenyl-pyrophosphoryl-MurNAc-(pentapeptide)GlcNAc (lipid intermediate II). This is UDP-N-acetylglucosamine--N-acetylmuramyl-(pentapeptide) pyrophosphoryl-undecaprenol N-acetylglucosamine transferase from Solibacter usitatus (strain Ellin6076).